The primary structure comprises 363 residues: Peptide chain release factor 2 (363 aa).

Glutamine 251 is subject to N5-methylglutamine.

It belongs to the prokaryotic/mitochondrial release factor family. Methylated by PrmC. Methylation increases the termination efficiency of RF2.

The protein resides in the cytoplasm. In terms of biological role, peptide chain release factor 2 directs the termination of translation in response to the peptide chain termination codons UGA and UAA. The polypeptide is Peptide chain release factor 2 (Helicobacter pylori (strain Shi470)).